A 957-amino-acid chain; its full sequence is MTQTLSQLEHDGAFIERHIGPSVSQQQHMLSVVGATSLDALIRQIVPADIQLPSPPAVGEAVTEHEALAELKAIAGRNQRYKSYIGMGYSAVLMPPVILRNVLENPGWYTAYTPYQPEVSQGRLEALLNFQQVTQDLTGLDLASASLLDEATAAAEAMAMAKRISKLKQAERFFVADDVHPQTLDVVRTRAETFGFEIVVGKAEEALKDDAVFGVLLQQAGTTGELHDYSDLMAALKARKVVSCVASDIMALVLLTAPGKQGADIVFGSAQRFGVPMGYGGPHAAFFACRDEHKRAMPGRIIGVSRDAAGNTAFRMAMQTREQHIRREKANSNICTSQVLLANIAGMYAVFHGPEGLKRIAGRIHRLTDILAAGLTQGGLLLRHRSWFDTLTIEVADKDVVLSRALSFGINLRSDLASAVGITLDEATTREDVLALFAVLLGDDHGLDIEALDASIAQEVATIPAGLLRHDAILSHPVFNRYHSETEMMRYLHRLARKDLALNQAMIPLGSCTMKLNAAAEMLPITWPEFAELHPFCPPEQALGYRQMIEQLSGWLVQLTGYDAVCMQPNSGAQGEYAGLLAIRRYHESRNEAGRHLCLIPSSAHGTNPASAQMAGMEVVVVACDKQGNIDLHDLREKAQAAGEQLSCIMVTYPSTHGVYEETIREVCQIVHQYGGQVYLDGANMNAQVGITTPGYIGADVSHLNLHKTFCIPHGGGGPGMGPIGVKAHLAPFVPGHQVVKIDGVLTEQGAVSAAPFGSASILPISWMYIRMMGAEGLKQASQMAILNANYIATRLQQAYPVLYTGRDGRVAHECILDIRPLKESTGISEMDIAKRLIDYGFHAPTMSFPVAGTLMVEPTESESQVEIDRFIDAMLAIRSEINRVAQGEWPLDDNPLVNAPHTQAELVADWAHPYSRELAVFPAGSEHKYWPSVKRLDDVYGDRNLFCSCVPMSDYA.

K708 bears the N6-(pyridoxal phosphate)lysine mark.

This sequence belongs to the GcvP family. As to quaternary structure, the glycine cleavage system is composed of four proteins: P, T, L and H. Pyridoxal 5'-phosphate serves as cofactor.

The catalysed reaction is N(6)-[(R)-lipoyl]-L-lysyl-[glycine-cleavage complex H protein] + glycine + H(+) = N(6)-[(R)-S(8)-aminomethyldihydrolipoyl]-L-lysyl-[glycine-cleavage complex H protein] + CO2. The glycine cleavage system catalyzes the degradation of glycine. The P protein binds the alpha-amino group of glycine through its pyridoxal phosphate cofactor; CO(2) is released and the remaining methylamine moiety is then transferred to the lipoamide cofactor of the H protein. In Pectobacterium atrosepticum (strain SCRI 1043 / ATCC BAA-672) (Erwinia carotovora subsp. atroseptica), this protein is Glycine dehydrogenase (decarboxylating).